Reading from the N-terminus, the 384-residue chain is NADP-dependent alcohol dehydrogenase 3 (384 aa).

This sequence belongs to the iron-containing alcohol dehydrogenase family.

The enzyme catalyses a primary alcohol + NADP(+) = an aldehyde + NADPH + H(+). In terms of biological role, has NADP-dependent alcohol dehydrogenase activity. This is NADP-dependent alcohol dehydrogenase 3 from Entamoeba histolytica (strain ATCC 30459 / HM-1:IMSS / ABRM).